The following is a 238-amino-acid chain: tRNA (guanine-N(7)-)-methyltransferase (238 aa).

S-adenosyl-L-methionine-binding residues include Glu68, Glu93, Asp120, and Asp143. The active site involves Asp143. Residues Lys147, Asp179, and 216–219 contribute to the substrate site; that span reads TKFE.

This sequence belongs to the class I-like SAM-binding methyltransferase superfamily. TrmB family.

It catalyses the reaction guanosine(46) in tRNA + S-adenosyl-L-methionine = N(7)-methylguanosine(46) in tRNA + S-adenosyl-L-homocysteine. It participates in tRNA modification; N(7)-methylguanine-tRNA biosynthesis. Its function is as follows. Catalyzes the formation of N(7)-methylguanine at position 46 (m7G46) in tRNA. The sequence is that of tRNA (guanine-N(7)-)-methyltransferase from Shewanella amazonensis (strain ATCC BAA-1098 / SB2B).